We begin with the raw amino-acid sequence, 172 residues long: MEKIVLLGYMGCGKSTIAQNLSKITQIPFLDLDICIEKRANLSIKEIFEQHGEIYFRKLEHEMFLELLQSSENAIIGLGGGTPCYANNHLLLQRDDIVSVYLKASIDTLYNRLVHNKSKRPLIANMDEEEMKEFIAKHLFDRSFYYNHAQHKVAVDNRTIDETVQDILDILA.

11 to 16 (GCGKST) is an ATP binding site. Residue serine 15 participates in Mg(2+) binding. Substrate contacts are provided by aspartate 33, arginine 57, and glycine 80. An ATP-binding site is contributed by arginine 120. Position 142 (arginine 142) interacts with substrate. Position 158 (arginine 158) interacts with ATP.

The protein belongs to the shikimate kinase family. In terms of assembly, monomer. Mg(2+) serves as cofactor.

It is found in the cytoplasm. It carries out the reaction shikimate + ATP = 3-phosphoshikimate + ADP + H(+). It participates in metabolic intermediate biosynthesis; chorismate biosynthesis; chorismate from D-erythrose 4-phosphate and phosphoenolpyruvate: step 5/7. In terms of biological role, catalyzes the specific phosphorylation of the 3-hydroxyl group of shikimic acid using ATP as a cosubstrate. In Flavobacterium johnsoniae (strain ATCC 17061 / DSM 2064 / JCM 8514 / BCRC 14874 / CCUG 350202 / NBRC 14942 / NCIMB 11054 / UW101) (Cytophaga johnsonae), this protein is Shikimate kinase.